We begin with the raw amino-acid sequence, 600 residues long: Spore coat protein SP96 (600 aa).

In terms of domain architecture, DSCP-N spans 21–140 (QSCSSYSGDN…DVCQCKGGQT (120 aa)). The disordered stretch occupies residues 139–178 (QTSGGSTTGSQTSGGSTSGGSTTGSQTSGGSTTGSQTSGS). Low complexity predominate over residues 161 to 178 (TGSQTSGGSTTGSQTSGS). Follistatin-like domains lie at 184–206 (SCSN…AVCV), 220–243 (PCDT…AKCT), 267–289 (LCDN…AKCI), 297–319 (VCRN…PICV), 331–359 (TCND…AKCC), and 394–416 (PCSV…AVCL). The tract at residues 420-530 (TTTTGSTSDS…ASSSSASSSS (111 aa)) is disordered.

In terms of processing, glycosylated; may contain fucose and GlcNAc-alpha-1-P-Ser.

The protein resides in the spore wall. The polypeptide is Spore coat protein SP96 (cotA) (Dictyostelium discoideum (Social amoeba)).